A 198-amino-acid polypeptide reads, in one-letter code: Ribosome maturation factor RimP (198 aa).

It belongs to the RimP family.

Its subcellular location is the cytoplasm. Required for maturation of 30S ribosomal subunits. The sequence is that of Ribosome maturation factor RimP from Agrobacterium fabrum (strain C58 / ATCC 33970) (Agrobacterium tumefaciens (strain C58)).